The chain runs to 103 residues: Nucleoid-associated protein CFF8240_0066 (103 aa).

This sequence belongs to the YbaB/EbfC family. Homodimer.

The protein resides in the cytoplasm. The protein localises to the nucleoid. Its function is as follows. Binds to DNA and alters its conformation. May be involved in regulation of gene expression, nucleoid organization and DNA protection. In Campylobacter fetus subsp. fetus (strain 82-40), this protein is Nucleoid-associated protein CFF8240_0066.